We begin with the raw amino-acid sequence, 425 residues long: GTPase Obg (425 aa).

The Obg domain occupies Met-1–Val-158. Residues Ala-159–Arg-330 form the OBG-type G domain. GTP contacts are provided by residues Gly-165–Ser-172, Phe-190–Thr-194, Asp-212–Gly-215, Asn-282–Asp-285, and Ser-311–Ala-313. The Mg(2+) site is built by Ser-172 and Thr-192. The region spanning Val-345–Ala-422 is the OCT domain.

Belongs to the TRAFAC class OBG-HflX-like GTPase superfamily. OBG GTPase family. As to quaternary structure, monomer. Mg(2+) serves as cofactor.

The protein localises to the cytoplasm. Functionally, an essential GTPase which binds GTP, GDP and possibly (p)ppGpp with moderate affinity, with high nucleotide exchange rates and a fairly low GTP hydrolysis rate. Plays a role in control of the cell cycle, stress response, ribosome biogenesis and in those bacteria that undergo differentiation, in morphogenesis control. The polypeptide is GTPase Obg (Symbiobacterium thermophilum (strain DSM 24528 / JCM 14929 / IAM 14863 / T)).